The sequence spans 547 residues: Glucose-6-phosphate isomerase (547 aa).

Glu-351 serves as the catalytic Proton donor. Catalysis depends on residues His-382 and Lys-509.

The protein belongs to the GPI family.

The protein resides in the cytoplasm. The catalysed reaction is alpha-D-glucose 6-phosphate = beta-D-fructose 6-phosphate. Its pathway is carbohydrate biosynthesis; gluconeogenesis. The protein operates within carbohydrate degradation; glycolysis; D-glyceraldehyde 3-phosphate and glycerone phosphate from D-glucose: step 2/4. In terms of biological role, catalyzes the reversible isomerization of glucose-6-phosphate to fructose-6-phosphate. This Coxiella burnetii (strain CbuK_Q154) (Coxiella burnetii (strain Q154)) protein is Glucose-6-phosphate isomerase.